The sequence spans 489 residues: Transmembrane protein 161A (489 aa).

Residues 1-23 (MAVMGIQMVVTLLVASLMQRVSP) form the signal peptide. Over 24 to 98 (HYSFGRWLLC…INTMDALVLR (75 aa)) the chain is Extracellular. Residue N34 is glycosylated (N-linked (GlcNAc...) asparagine). The helical transmembrane segment at 99-119 (YFLEYQWFIDFALYSTIIYLF) threads the bilayer. Over 120–134 (TEAYYCVVDAQNEIN) the chain is Cytoplasmic. A helical membrane pass occupies residues 135–155 (IGVLWCLMSIIFSIKVLFTVM). Residues 156–166 (KHYFRSEEGGE) are Extracellular-facing. Residues 167–187 (RSVCMTFAFFFLLIAMIVTIV) traverse the membrane as a helical segment. The Cytoplasmic segment spans residues 188–224 (RDEYLEFGLEPGLASVCHNLENFLAQQGWQWSMPFVK). A helical membrane pass occupies residues 225–245 (LAFKIALVALCAFLGGCLTFP). Residues 246 to 264 (GLRLAQTHLDALKMAADRP) are Extracellular-facing. A helical transmembrane segment spans residues 265 to 285 (MLQLLLHMSFLPPVIVVVLWI). At 286 to 304 (RPITRDFLLNAPMGKESVE) the chain is on the cytoplasmic side. The helical transmembrane segment at 305 to 325 (LMSNSAYNTFRLWIIVLLCLL) threads the bilayer. Over 326–370 (RFCLTRFHLQAYLCLADRWVEQMKREAGRISMLEIQRKISRIFCY) the chain is Extracellular. The chain crosses the membrane as a helical span at residues 371-391 (LTVVALQYLAPVILTFHCVFM). Residues 392–459 (LKSLGDYSWG…GLFTPLFFRG (68 aa)) lie on the Cytoplasmic side of the membrane. The disordered stretch occupies residues 413–432 (VDSSPVQSHSPTSEEEEDTE). The helical transmembrane segment at 460 to 480 (IFSFLTWWVSVCQIITSLFGL) threads the bilayer. At 481–489 (YFHQYLGAS) the chain is on the extracellular side.

This sequence belongs to the TMEM161 family.

The protein resides in the membrane. In terms of biological role, may play a role in protection against oxidative stress. The chain is Transmembrane protein 161A (tmem161a) from Xenopus laevis (African clawed frog).